Here is a 435-residue protein sequence, read N- to C-terminus: Trigger factor (435 aa).

The region spanning 163–248 (GDYVTFDFKG…IKEIKVKELP (86 aa)) is the PPIase FKBP-type domain.

The protein belongs to the FKBP-type PPIase family. Tig subfamily.

It is found in the cytoplasm. It catalyses the reaction [protein]-peptidylproline (omega=180) = [protein]-peptidylproline (omega=0). Functionally, involved in protein export. Acts as a chaperone by maintaining the newly synthesized protein in an open conformation. Functions as a peptidyl-prolyl cis-trans isomerase. This chain is Trigger factor, found in Geotalea daltonii (strain DSM 22248 / JCM 15807 / FRC-32) (Geobacter daltonii).